We begin with the raw amino-acid sequence, 382 residues long: Na(+)/H(+) antiporter NhaA 1 (382 aa).

11 consecutive transmembrane segments (helical) span residues Glu-10–Pro-30, Phe-45–Ala-65, Leu-87–Leu-107, Gly-116–Phe-136, Phe-145–Tyr-165, Leu-170–Leu-190, Ala-211–Leu-231, Leu-252–Leu-272, Ala-275–Ile-295, Leu-326–Phe-346, and Gly-353–Gly-373.

The protein belongs to the NhaA Na(+)/H(+) (TC 2.A.33) antiporter family.

The protein resides in the cell inner membrane. The catalysed reaction is Na(+)(in) + 2 H(+)(out) = Na(+)(out) + 2 H(+)(in). Na(+)/H(+) antiporter that extrudes sodium in exchange for external protons. In Pelobacter propionicus (strain DSM 2379 / NBRC 103807 / OttBd1), this protein is Na(+)/H(+) antiporter NhaA 1.